A 322-amino-acid chain; its full sequence is Lipoyl synthase (322 aa).

7 residues coordinate [4Fe-4S] cluster: Cys69, Cys74, Cys80, Cys95, Cys99, Cys102, and Ser309. Residues 81–298 form the Radical SAM core domain; it reads FNHGTATFMI…KEIALELGFT (218 aa).

It belongs to the radical SAM superfamily. Lipoyl synthase family. The cofactor is [4Fe-4S] cluster.

It is found in the cytoplasm. It catalyses the reaction [[Fe-S] cluster scaffold protein carrying a second [4Fe-4S](2+) cluster] + N(6)-octanoyl-L-lysyl-[protein] + 2 oxidized [2Fe-2S]-[ferredoxin] + 2 S-adenosyl-L-methionine + 4 H(+) = [[Fe-S] cluster scaffold protein] + N(6)-[(R)-dihydrolipoyl]-L-lysyl-[protein] + 4 Fe(3+) + 2 hydrogen sulfide + 2 5'-deoxyadenosine + 2 L-methionine + 2 reduced [2Fe-2S]-[ferredoxin]. The protein operates within protein modification; protein lipoylation via endogenous pathway; protein N(6)-(lipoyl)lysine from octanoyl-[acyl-carrier-protein]: step 2/2. Its function is as follows. Catalyzes the radical-mediated insertion of two sulfur atoms into the C-6 and C-8 positions of the octanoyl moiety bound to the lipoyl domains of lipoate-dependent enzymes, thereby converting the octanoylated domains into lipoylated derivatives. In Photobacterium profundum (strain SS9), this protein is Lipoyl synthase.